Reading from the N-terminus, the 215-residue chain is 3,4-dihydroxy-2-butanone 4-phosphate synthase (215 aa).

Residues 38 to 39 (RE), Asp43, 151 to 155 (RRGHT), and Glu175 each bind D-ribulose 5-phosphate. Glu39 contributes to the Mg(2+) binding site. His154 is a Mg(2+) binding site.

This sequence belongs to the DHBP synthase family. As to quaternary structure, homodimer. Mg(2+) serves as cofactor. It depends on Mn(2+) as a cofactor.

It catalyses the reaction D-ribulose 5-phosphate = (2S)-2-hydroxy-3-oxobutyl phosphate + formate + H(+). The protein operates within cofactor biosynthesis; riboflavin biosynthesis; 2-hydroxy-3-oxobutyl phosphate from D-ribulose 5-phosphate: step 1/1. Functionally, catalyzes the conversion of D-ribulose 5-phosphate to formate and 3,4-dihydroxy-2-butanone 4-phosphate. The polypeptide is 3,4-dihydroxy-2-butanone 4-phosphate synthase (Haemophilus influenzae (strain PittGG)).